The following is a 170-amino-acid chain: Protein SprT (170 aa).

The SprT-like domain maps to 19–163 (REKLQQANLR…RCLHCGTSLR (145 aa)). His78 provides a ligand contact to Zn(2+). Residue Glu79 is part of the active site. Residue His82 participates in Zn(2+) binding.

It belongs to the SprT family. It depends on Zn(2+) as a cofactor.

It localises to the cytoplasm. The polypeptide is Protein SprT (Erwinia tasmaniensis (strain DSM 17950 / CFBP 7177 / CIP 109463 / NCPPB 4357 / Et1/99)).